Consider the following 180-residue polypeptide: MFPMMTGFMNYGQQTVRAARYIGQSFMITLSHANRLPVTIQYPYEKSITSERFRGRIHFEFDKCIACEVCVRVCPIDLPVVDWRLETDIRKKRLLNYSIDFGICIFCGNCVEYCPTNCLSMTEEYELSIYDRHELNYNQIALGRLPMSVIGDYTIRTIMNSTQIKITTDKPLDSITITND.

4Fe-4S ferredoxin-type domains follow at residues 55-84 (GRIH…VDWR) and 95-124 (LNYS…MTEE). Positions 64, 67, 70, 74, 104, 107, 110, and 114 each coordinate [4Fe-4S] cluster.

This sequence belongs to the complex I 23 kDa subunit family. NDH is composed of at least 16 different subunits, 5 of which are encoded in the nucleus. [4Fe-4S] cluster is required as a cofactor.

Its subcellular location is the plastid. It is found in the chloroplast thylakoid membrane. The enzyme catalyses a plastoquinone + NADH + (n+1) H(+)(in) = a plastoquinol + NAD(+) + n H(+)(out). The catalysed reaction is a plastoquinone + NADPH + (n+1) H(+)(in) = a plastoquinol + NADP(+) + n H(+)(out). In terms of biological role, NDH shuttles electrons from NAD(P)H:plastoquinone, via FMN and iron-sulfur (Fe-S) centers, to quinones in the photosynthetic chain and possibly in a chloroplast respiratory chain. The immediate electron acceptor for the enzyme in this species is believed to be plastoquinone. Couples the redox reaction to proton translocation, and thus conserves the redox energy in a proton gradient. The protein is NAD(P)H-quinone oxidoreductase subunit I, chloroplastic of Drimys granadensis.